We begin with the raw amino-acid sequence, 191 residues long: Nascent polypeptide-associated complex subunit alpha (191 aa).

Residues 24-89 (SRPERKARKA…AKVEDPNSAA (66 aa)) form the NAC-A/B domain. The interval 126–149 (QDAPSADSSAPAPSGEATDASASG) is disordered. Positions 127–139 (DAPSADSSAPAPS) are enriched in low complexity. In terms of domain architecture, UBA spans 153–191 (VSDEEIQLIVAQTGVDEAKAREAYISEKGDLINAIMKLQ).

The protein belongs to the NAC-alpha family. Part of the nascent polypeptide-associated complex (NAC), consisting of EGD2 and EGD1. NAC associates with ribosomes via EGD1.

It is found in the cytoplasm. It localises to the nucleus. Its function is as follows. Component of the nascent polypeptide-associated complex (NAC), a dynamic component of the ribosomal exit tunnel, protecting the emerging polypeptides from interaction with other cytoplasmic proteins to ensure appropriate nascent protein targeting. The NAC complex also promotes mitochondrial protein import by enhancing productive ribosome interactions with the outer mitochondrial membrane and blocks the inappropriate interaction of ribosomes translating non-secretory nascent polypeptides with translocation sites in the membrane of the endoplasmic reticulum. EGD2 may also be involved in transcription regulation. The chain is Nascent polypeptide-associated complex subunit alpha (EGD2) from Cryptococcus neoformans var. neoformans serotype D (strain B-3501A) (Filobasidiella neoformans).